Reading from the N-terminus, the 477-residue chain is Methylenetetrahydrofolate--tRNA-(uracil-5-)-methyltransferase TrmFO (477 aa).

Residue 15–20 (GAGLAG) participates in FAD binding.

It belongs to the MnmG family. TrmFO subfamily. The cofactor is FAD.

It is found in the cytoplasm. It carries out the reaction uridine(54) in tRNA + (6R)-5,10-methylene-5,6,7,8-tetrahydrofolate + NADH + H(+) = 5-methyluridine(54) in tRNA + (6S)-5,6,7,8-tetrahydrofolate + NAD(+). The enzyme catalyses uridine(54) in tRNA + (6R)-5,10-methylene-5,6,7,8-tetrahydrofolate + NADPH + H(+) = 5-methyluridine(54) in tRNA + (6S)-5,6,7,8-tetrahydrofolate + NADP(+). Functionally, catalyzes the folate-dependent formation of 5-methyl-uridine at position 54 (M-5-U54) in all tRNAs. The chain is Methylenetetrahydrofolate--tRNA-(uracil-5-)-methyltransferase TrmFO from Nitrobacter hamburgensis (strain DSM 10229 / NCIMB 13809 / X14).